Here is a 357-residue protein sequence, read N- to C-terminus: UDP-N-acetylglucosamine--N-acetylmuramyl-(pentapeptide) pyrophosphoryl-undecaprenol N-acetylglucosamine transferase (357 aa).

UDP-N-acetyl-alpha-D-glucosamine contacts are provided by residues threonine 14 to glycine 16, asparagine 120, arginine 164, serine 194, and glutamine 291.

It belongs to the glycosyltransferase 28 family. MurG subfamily.

It is found in the cell inner membrane. It carries out the reaction di-trans,octa-cis-undecaprenyl diphospho-N-acetyl-alpha-D-muramoyl-L-alanyl-D-glutamyl-meso-2,6-diaminopimeloyl-D-alanyl-D-alanine + UDP-N-acetyl-alpha-D-glucosamine = di-trans,octa-cis-undecaprenyl diphospho-[N-acetyl-alpha-D-glucosaminyl-(1-&gt;4)]-N-acetyl-alpha-D-muramoyl-L-alanyl-D-glutamyl-meso-2,6-diaminopimeloyl-D-alanyl-D-alanine + UDP + H(+). It functions in the pathway cell wall biogenesis; peptidoglycan biosynthesis. In terms of biological role, cell wall formation. Catalyzes the transfer of a GlcNAc subunit on undecaprenyl-pyrophosphoryl-MurNAc-pentapeptide (lipid intermediate I) to form undecaprenyl-pyrophosphoryl-MurNAc-(pentapeptide)GlcNAc (lipid intermediate II). In Fusobacterium nucleatum subsp. nucleatum (strain ATCC 25586 / DSM 15643 / BCRC 10681 / CIP 101130 / JCM 8532 / KCTC 2640 / LMG 13131 / VPI 4355), this protein is UDP-N-acetylglucosamine--N-acetylmuramyl-(pentapeptide) pyrophosphoryl-undecaprenol N-acetylglucosamine transferase.